We begin with the raw amino-acid sequence, 124 residues long: 14 kDa peptide of ubiquinol-cytochrome c2 oxidoreductase complex (124 aa).

Residues 85–102 (LGGFASGALLALALAGIF) traverse the membrane as a helical segment.

It is found in the cell inner membrane. Its function is as follows. Component of the ubiquinol-cytochrome c reductase complex (complex III or cytochrome b-c1 complex), which is a respiratory chain that generates an electrochemical potential coupled to ATP synthesis. This is 14 kDa peptide of ubiquinol-cytochrome c2 oxidoreductase complex from Cereibacter sphaeroides (Rhodobacter sphaeroides).